The primary structure comprises 109 residues: MQNIFYRSAYVHTVCPARLEYYLLLPLLLYYYYYYHHHEPDDPNCEAHFSYFTNPSWDTEGLIYTKLFLKSTRPMGLIISLSVSNNLSPRSRSGPMAASFAKDVISLPE.

This is an uncharacterized protein from Saccharomyces cerevisiae (strain ATCC 204508 / S288c) (Baker's yeast).